Consider the following 115-residue polypeptide: Iron-sulfur cluster insertion protein ErpA (115 aa).

Residues Cys-43, Cys-107, and Cys-109 each coordinate iron-sulfur cluster.

The protein belongs to the HesB/IscA family. As to quaternary structure, homodimer. The cofactor is iron-sulfur cluster.

Functionally, required for insertion of 4Fe-4S clusters for at least IspG. The polypeptide is Iron-sulfur cluster insertion protein ErpA (Buchnera aphidicola subsp. Baizongia pistaciae (strain Bp)).